Here is a 647-residue protein sequence, read N- to C-terminus: 1-deoxy-D-xylulose-5-phosphate synthase (647 aa).

Residues histidine 72 and 113–115 (GHA) contribute to the thiamine diphosphate site. Aspartate 144 serves as a coordination point for Mg(2+). Thiamine diphosphate-binding positions include 145-146 (GA), asparagine 174, tyrosine 287, and glutamate 370. Asparagine 174 contributes to the Mg(2+) binding site.

This sequence belongs to the transketolase family. DXPS subfamily. Homodimer. Mg(2+) is required as a cofactor. The cofactor is thiamine diphosphate.

The catalysed reaction is D-glyceraldehyde 3-phosphate + pyruvate + H(+) = 1-deoxy-D-xylulose 5-phosphate + CO2. The protein operates within metabolic intermediate biosynthesis; 1-deoxy-D-xylulose 5-phosphate biosynthesis; 1-deoxy-D-xylulose 5-phosphate from D-glyceraldehyde 3-phosphate and pyruvate: step 1/1. Functionally, catalyzes the acyloin condensation reaction between C atoms 2 and 3 of pyruvate and glyceraldehyde 3-phosphate to yield 1-deoxy-D-xylulose-5-phosphate (DXP). The protein is 1-deoxy-D-xylulose-5-phosphate synthase of Synechococcus sp. (strain WH7803).